Consider the following 520-residue polypeptide: GMP synthase [glutamine-hydrolyzing] (520 aa).

The Glutamine amidotransferase type-1 domain occupies 8–202; sequence RLLIIDFGSQ…FVRLAGFSGD (195 aa). The active-site Nucleophile is C86. Catalysis depends on residues H177 and E179. Positions 203–395 constitute a GMPS ATP-PPase domain; the sequence is WTMGAYREQM…LGLPDSFIGR (193 aa). 230 to 236 provides a ligand contact to ATP; sequence SGGVDSS.

Homodimer.

The catalysed reaction is XMP + L-glutamine + ATP + H2O = GMP + L-glutamate + AMP + diphosphate + 2 H(+). Its pathway is purine metabolism; GMP biosynthesis; GMP from XMP (L-Gln route): step 1/1. Functionally, catalyzes the synthesis of GMP from XMP. This Ruegeria sp. (strain TM1040) (Silicibacter sp.) protein is GMP synthase [glutamine-hydrolyzing].